Reading from the N-terminus, the 356-residue chain is Tyrosinase P (356 aa).

Positions 1 to 19 (MGFYRNLVLVAASCTQALG) are cleaved as a signal peptide. N81 carries N-linked (GlcNAc...) asparagine glycosylation. 2 residues coordinate Cu cation: H87 and H96. N-linked (GlcNAc...) asparagine glycans are attached at residues N148 and N193. H203 lines the Cu cation pocket. N-linked (GlcNAc...) asparagine glycosylation is present at N226. H263 and H286 together coordinate Cu cation. N-linked (GlcNAc...) asparagine glycosylation occurs at N309.

The protein belongs to the tyrosinase family. Requires Cu(2+) as cofactor. In terms of processing, glycosylated.

Its subcellular location is the endoplasmic reticulum lumen. The protein resides in the golgi apparatus lumen. It catalyses the reaction aspulvinone E + O2 = (5Z)-3-(3,4-dihydroxyphenyl)-5-[(3,4-dihydroxyphenyl)methylidene]-5-oxo-2,5-dihydrofuran-3-olate. The enzyme catalyses aspulvinone E + O2 = (2Z)-2-[(3,4-dioxocyclohexa-1,5-dien-1-yl)methylidene]-4-(4-hydroxyphenyl)-5-oxo-2,5-dihydrofuran-3-olate + H2O. Activity is inhibited by the presence of dithiothreitol (DTT). Functionally, tyrosinase; part of the gene cluster that mediates the biosynthesis of Asp-melanin, a pigment that confers resistance against UV light and hampers phagocytosis by soil amoeba. The nonribosomal peptide synthase melA converts 4-hydroxyphenylpyruvate (4-HPPA) to aspulvinone E. The tyrosinase tyrP then performs hydroxylations of both aromatic moieties of aspulvinone E. The product of tyrP is highly unstable, and, due to the high reactivity of methides and ortho-diquinones, the polymeric Asp-melanin forms spontaneously. In Aspergillus terreus, this protein is Tyrosinase P (tyrP).